A 125-amino-acid chain; its full sequence is Small ribosomal subunit protein uS13 (125 aa).

Positions 92 to 125 (RRSLPVRGQRTQTNARTRKGKRKTVAGKKKATKK) are disordered. Over residues 107–125 (RTRKGKRKTVAGKKKATKK) the composition is skewed to basic residues.

The protein belongs to the universal ribosomal protein uS13 family. In terms of assembly, part of the 30S ribosomal subunit. Forms a loose heterodimer with protein S19. Forms two bridges to the 50S subunit in the 70S ribosome.

In terms of biological role, located at the top of the head of the 30S subunit, it contacts several helices of the 16S rRNA. In the 70S ribosome it contacts the 23S rRNA (bridge B1a) and protein L5 of the 50S subunit (bridge B1b), connecting the 2 subunits; these bridges are implicated in subunit movement. Contacts the tRNAs in the A and P-sites. The sequence is that of Small ribosomal subunit protein uS13 from Chlorobium limicola (strain DSM 245 / NBRC 103803 / 6330).